We begin with the raw amino-acid sequence, 216 residues long: Cytidylate kinase (216 aa).

9-17 (GPAASGKGT) lines the ATP pocket.

Belongs to the cytidylate kinase family. Type 1 subfamily.

The protein localises to the cytoplasm. It catalyses the reaction CMP + ATP = CDP + ADP. The catalysed reaction is dCMP + ATP = dCDP + ADP. This Caulobacter sp. (strain K31) protein is Cytidylate kinase.